A 391-amino-acid polypeptide reads, in one-letter code: DNA-directed RNA polymerase subunit Rpo1C (391 aa).

It belongs to the RNA polymerase beta' chain family. In terms of assembly, part of the RNA polymerase complex.

The protein resides in the cytoplasm. It localises to the chromosome. The enzyme catalyses RNA(n) + a ribonucleoside 5'-triphosphate = RNA(n+1) + diphosphate. DNA-dependent RNA polymerase (RNAP) catalyzes the transcription of DNA into RNA using the four ribonucleoside triphosphates as substrates. Forms part of the jaw domain. This Thermococcus kodakarensis (strain ATCC BAA-918 / JCM 12380 / KOD1) (Pyrococcus kodakaraensis (strain KOD1)) protein is DNA-directed RNA polymerase subunit Rpo1C.